Reading from the N-terminus, the 710-residue chain is Cyclomaltodextrin glucanotransferase (710 aa).

A signal peptide spans 1–27 (MKKTFKLILVLMLSLTLVFGLTAPIQA). Ca(2+)-binding residues include Asp-54, Asn-56, Asn-59, Asn-60, Gly-78, and Asp-80. Substrate is bound at residue 128–129 (YW). Position 167 (Asn-167) interacts with Ca(2+). His-168 serves as a coordination point for substrate. A Ca(2+)-binding site is contributed by Ile-218. A substrate-binding site is contributed by 221-224 (NLFD). Asp-227 is a Ca(2+) binding site. Arg-255 lines the substrate pocket. The active-site Nucleophile is Asp-257. Residue 260 to 261 (KH) participates in substrate binding. Residue His-261 coordinates Ca(2+). The active-site Proton donor is the Glu-285. Residues His-355, Asp-398, and Arg-402 each contribute to the substrate site. In terms of domain architecture, IPT/TIG spans 526-603 (PLIGHVGPTM…GATSNTYNNI (78 aa)). The CBM20 domain maps to 605–710 (ILTGNQICVR…TGTVIVNWQQ (106 aa)).

It belongs to the glycosyl hydrolase 13 family. Ca(2+) serves as cofactor.

Its subcellular location is the secreted. It catalyses the reaction Cyclizes part of a (1-&gt;4)-alpha-D-glucan chain by formation of a (1-&gt;4)-alpha-D-glucosidic bond.. Its function is as follows. Degrades starch to alpha-, beta-, and gamma-cyclodextrins, as well as linear sugars. The protein is Cyclomaltodextrin glucanotransferase (amyA) of Thermoanaerobacterium thermosulfurigenes (Clostridium thermosulfurogenes).